The following is a 1770-amino-acid chain: Serine/threonine-protein kinase RIM15 (1770 aa).

The segment at 334–358 (HSLSTFPQDNGNNNNNNNNNNNNNN) is disordered. Residues 343–358 (NGNNNNNNNNNNNNNN) show a composition bias toward low complexity. Phosphoserine is present on residues Ser-380 and Ser-476. Disordered stretches follow at residues 530–563 (TPTA…LDSN) and 583–694 (STIS…NSVL). Polar residues predominate over residues 583–601 (STISIDRDNNTNSRGSSMK). Over residues 611 to 632 (SRTSNSERPSSSSSRLGIRSRS) the composition is skewed to low complexity. A compositionally biased stretch (basic and acidic residues) spans 637 to 660 (QKIEYSHVDNDDRTNEMLSRDKDS). Residues 669–692 (TTITSSTQATTTGTKTNSNNSTNS) show a composition bias toward low complexity. Thr-704 is modified (phosphothreonine). Residues Ser-709, Ser-733, Ser-736, and Ser-737 each carry the phosphoserine modification. At Thr-747 the chain carries Phosphothreonine. The Protein kinase domain occupies 794–1254 (YDILKPISKG…IQEIKDHPYF (461 aa)). ATP contacts are provided by residues 800–808 (ISKGAYGSV) and Lys-823. Asp-918 (proton acceptor) is an active-site residue. Positions 970–980 (NNFTMNNNNSN) are enriched in low complexity. Residues 970-1032 (NNFTMNNNNS…MTPTPSTNTV (63 aa)) form a disordered region. The segment covering 981–990 (HSQLSTPDSF) has biased composition (polar residues). The span at 1014–1031 (YSSTSNSHSMTPTPSTNT) shows a compositional bias: low complexity. Phosphoserine occurs at positions 1044, 1048, and 1064. A Phosphothreonine; by PHO85 modification is found at Thr-1075. The 66-residue stretch at 1255–1320 (KNVDWDHVYD…NTDVSELSAA (66 aa)) folds into the AGC-kinase C-terminal domain. Low complexity predominate over residues 1378-1391 (TGYITPNGTGTTTT). The tract at residues 1378–1403 (TGYITPNGTGTTTTSAKNSPNLKNLS) is disordered. The segment covering 1392–1401 (SAKNSPNLKN) has biased composition (polar residues). Phosphoserine is present on Ser-1421. Disordered stretches follow at residues 1448–1507 (KSEH…STFG) and 1519–1572 (FSTR…PANT). The segment covering 1463 to 1481 (SSASLMGSSSDGSVSTPGS) has biased composition (low complexity). A phosphoserine mark is found at Ser-1531, Ser-1538, Ser-1542, and Ser-1565. One can recognise a Response regulatory domain in the interval 1636-1750 (DVLVCEPIPI…ELKKLVAKYA (115 aa)). A Phosphoserine modification is found at Ser-1764.

It belongs to the protein kinase superfamily. Ser/Thr protein kinase family. Interacts with the cyclin-dependent kinase (CDK) PHO85 and IGO1. Autophosphorylated. Phosphorylation by PKA strongly inhibits kinase activity. Phosphorylation by cyclin-CDK PHO80-PHO85 under favorable growth condition causes inactivation of RIM15 by promoting its export to the cytoplasm.

Its subcellular location is the cytoplasm. The protein resides in the nucleus. It carries out the reaction L-seryl-[protein] + ATP = O-phospho-L-seryl-[protein] + ADP + H(+). The catalysed reaction is L-threonyl-[protein] + ATP = O-phospho-L-threonyl-[protein] + ADP + H(+). With respect to regulation, kinase activity is inhibited by phosphorylation by cAMP-dependent protein kinase (PKA). Functionally, protein kinase that positively regulates proper entry into stationary phase of cells under nutrient starvation conditions. Involved in glycogen and trehalose accumulation, derepression of stress-induced genes, induction of thermotolerance and starvation resistance, and proper G1 cell cycle arrest. Also involved in the activation of a meiotic genes activation pathway. Phosphorylates IGO1 and IGO2, both involved in the TORC1 control of gene expression and chronological life span. The sequence is that of Serine/threonine-protein kinase RIM15 (RIM15) from Saccharomyces cerevisiae (strain ATCC 204508 / S288c) (Baker's yeast).